The primary structure comprises 279 residues: Thymidylate synthase (279 aa).

Residue 133–134 coordinates dUMP; sequence RR. Cysteine 154 functions as the Nucleophile in the catalytic mechanism. DUMP-binding positions include 178 to 181, asparagine 189, and 219 to 221; these read RSND and HIY. Aspartate 181 is a (6R)-5,10-methylene-5,6,7,8-tetrahydrofolate binding site. Residue alanine 278 participates in (6R)-5,10-methylene-5,6,7,8-tetrahydrofolate binding.

It belongs to the thymidylate synthase family. Bacterial-type ThyA subfamily. In terms of assembly, homodimer.

Its subcellular location is the cytoplasm. The enzyme catalyses dUMP + (6R)-5,10-methylene-5,6,7,8-tetrahydrofolate = 7,8-dihydrofolate + dTMP. It functions in the pathway pyrimidine metabolism; dTTP biosynthesis. In terms of biological role, catalyzes the reductive methylation of 2'-deoxyuridine-5'-monophosphate (dUMP) to 2'-deoxythymidine-5'-monophosphate (dTMP) while utilizing 5,10-methylenetetrahydrofolate (mTHF) as the methyl donor and reductant in the reaction, yielding dihydrofolate (DHF) as a by-product. This enzymatic reaction provides an intracellular de novo source of dTMP, an essential precursor for DNA biosynthesis. The chain is Thymidylate synthase from Streptococcus pyogenes serotype M6 (strain ATCC BAA-946 / MGAS10394).